The following is a 361-amino-acid chain: Divinyl chlorophyll a/b light-harvesting protein PcbD (361 aa).

Transmembrane regions (helical) follow at residues 27–47 (FIASHVGHTGLICFAAGGSTL), 93–113 (IVHLILSMVYGGGGLLHGILF), 140–160 (FILGHHLIFMGVACAWFVEWA), 201–221 (VMGGHAFLAFAEITGGAFHIV), 248–268 (AVLSWSLAGIGWMAIVAAFWC), and 315–335 (LTNVHYYLGFFFLQGHFWHAL).

Belongs to the PsbB/PsbC family. IsiA/Pcb subfamily. In terms of assembly, the antenna complex consists of divinyl chlorophylls (a and b) and divinyl chlorophyll a/b binding proteins and binds more divinyl chlorophyll b than does the antenna complex from high-light-adapted Prochlorococcus. The cofactor is divinyl chlorophyll a. It depends on divinyl chlorophyll b as a cofactor.

The protein localises to the cellular thylakoid membrane. Functionally, the antenna complex functions as a light receptor, it captures and delivers excitation energy to photosystems II and I. The Prochlorales pcb genes are not related to higher plant LHCs. This is Divinyl chlorophyll a/b light-harvesting protein PcbD (pcbD) from Prochlorococcus marinus (strain SARG / CCMP1375 / SS120).